The following is a 3085-amino-acid chain: Genome polyprotein (3085 aa).

Positions 170 to 313 constitute a Peptidase S30 domain; the sequence is LVAKSDFDDL…AGDVGRTMHY (144 aa). Catalysis depends on for P1 proteinase activity residues H224, E233, and S266. An Involved in interaction with stylet and aphid transmission motif is present at residues 365–368; the sequence is KMAC. The Involved in virions binding and aphid transmission motif lies at 622–624; sequence PTK. The 123-residue stretch at 648–770 folds into the Peptidase C6 domain; that stretch reads MYIAKEGYCY…EGEMKWYRVG (123 aa). Residues C656 and H729 each act as for helper component proteinase activity in the active site. The 153-residue stretch at 1241 to 1393 folds into the Helicase ATP-binding domain; sequence TICASSEQEF…TQHDVLIKIE (153 aa). 1254–1261 is a binding site for ATP; sequence GAVGSGKS. Positions 1343–1346 match the DESH box motif; it reads DESH. Residues 1412-1571 form the Helicase C-terminal domain; sequence DVVQNGDNIL…NLPVMTHNVT (160 aa). The short motif at 1895-1904 is the Nuclear localization signal element; the sequence is ERGKRKGNNS. At Y1919 the chain carries O-(5'-phospho-RNA)-tyrosine. A Peptidase C4 domain is found at 2047 to 2266; the sequence is GKSIVKGLRN…VAWNGMTLRE (220 aa). Residues H2092, D2127, and C2198 each act as for nuclear inclusion protein A activity in the active site. Residues 2535 to 2659 enclose the RdRp catalytic domain; sequence WIYCDADGSQ…AIYPSKEKFL (125 aa). The tract at residues 2801–2869 is disordered; that stretch reads DGPDIVTYQG…STAVPRLKQI (69 aa). The segment covering 2816 to 2831 has biased composition (low complexity); that stretch reads KSSQPQSSSPQVPQQV. Residues 2839 to 2855 are compositionally biased toward basic and acidic residues; that stretch reads GRDKQSVIKHDSTKSKD. T3068 carries the post-translational modification Phosphothreonine.

The protein belongs to the potyviridae genome polyprotein family. Interacts with host eIF4E protein (via cap-binding region); this interaction mediates the translation of the VPg-viral RNA conjugates. Part of a complex that comprises VPg, RNA, host EIF4E and EIF4G; this interaction mediates the translation of the VPg-viral RNA conjugates. Post-translationally, VPg is uridylylated by the polymerase and is covalently attached to the 5'-end of the genomic RNA. This uridylylated form acts as a nucleotide-peptide primer for the polymerase. Potyviral RNA is expressed as two polyproteins which undergo post-translational proteolytic processing. Genome polyprotein is processed by NIa-pro, P1 and HC-pro proteinases resulting in the production of at least ten individual proteins. P3N-PIPO polyprotein is cleaved by P1 and HC-pro proteinases resulting in the production of three individual proteins. The P1 proteinase and the HC-pro cleave only their respective C-termini autocatalytically. 6K1 is essential for proper proteolytic separation of P3 from CI.

It is found in the host cytoplasmic vesicle. Its subcellular location is the host nucleus. The protein resides in the virion. The catalysed reaction is RNA(n) + a ribonucleoside 5'-triphosphate = RNA(n+1) + diphosphate. It carries out the reaction Hydrolyzes glutaminyl bonds, and activity is further restricted by preferences for the amino acids in P6 - P1' that vary with the species of potyvirus, e.g. Glu-Xaa-Xaa-Tyr-Xaa-Gln-|-(Ser or Gly) for the enzyme from tobacco etch virus. The natural substrate is the viral polyprotein, but other proteins and oligopeptides containing the appropriate consensus sequence are also cleaved.. It catalyses the reaction Hydrolyzes a Gly-|-Gly bond at its own C-terminus, commonly in the sequence -Tyr-Xaa-Val-Gly-|-Gly, in the processing of the potyviral polyprotein.. Required for aphid transmission and also has proteolytic activity. Only cleaves a Gly-Gly dipeptide at its own C-terminus. Interacts with virions and aphid stylets. Acts as a suppressor of RNA-mediated gene silencing, also known as post-transcriptional gene silencing (PTGS), a mechanism of plant viral defense that limits the accumulation of viral RNAs. May have RNA-binding activity. Its function is as follows. Has helicase activity. It may be involved in replication. Functionally, indispensable for virus replication. Reduces the abundance of host transcripts related to jasmonic acid biosynthesis therefore altering the host defenses. In order to increase its own stability, decreases host protein degradation pathways. In terms of biological role, indispensable for virus replication. Mediates the cap-independent, EIF4E-dependent translation of viral genomic RNAs. Binds to the cap-binding site of host EIF4E and thus interferes with the host EIF4E-dependent mRNA export and translation. VPg-RNA directly binds EIF4E and is a template for transcription. Also forms trimeric complexes with EIF4E-EIF4G, which are templates for translation. Its function is as follows. Has RNA-binding and proteolytic activities. Functionally, an RNA-dependent RNA polymerase that plays an essential role in the virus replication. In terms of biological role, involved in aphid transmission, cell-to-cell and systemis movement, encapsidation of the viral RNA and in the regulation of viral RNA amplification. This Beet mosaic virus (BtMV) protein is Genome polyprotein.